The sequence spans 477 residues: D-alanyl-D-alanine carboxypeptidase DacB (477 aa).

Residues 1–20 (MRFSRFIIGLTSCIAFSVQA) form the signal peptide. Ser-62 functions as the Acyl-ester intermediate in the catalytic mechanism. Lys-65 functions as the Proton acceptor in the catalytic mechanism. An absent in class-A beta-lactamases region spans residues 90–263 (GNVENGVLKG…YAGAILKDEL (174 aa)). Ser-306 is a catalytic residue. Lys-417 is a binding site for substrate.

It belongs to the peptidase S13 family.

It localises to the periplasm. The enzyme catalyses Preferential cleavage: (Ac)2-L-Lys-D-Ala-|-D-Ala. Also transpeptidation of peptidyl-alanyl moieties that are N-acyl substituents of D-alanine.. Its pathway is cell wall biogenesis; peptidoglycan biosynthesis. In terms of biological role, not involved in transpeptidation but exclusively catalyzes a DD-carboxypeptidase and DD-endopeptidase reaction. This is D-alanyl-D-alanine carboxypeptidase DacB (dacB) from Escherichia coli (strain K12).